We begin with the raw amino-acid sequence, 752 residues long: MIDGVEESDAPLSPKSPFARRNGRSLRIQRLVDCQHFHYTTVELGPVKVVIIAINTDENATERIKMRVESESNSWLVERSREDWAVFDRQLHRCVFERRHSRLDELFPLIHLESAKFEEVLVKYTERLSELTGSIITCYPVLKFLEIDSRGGHFEPAEETSINVPAIAAAVVTKDFEPTDNSQLRLRVGDIVSITEMSTASPNEQTFWKAKLTISNQKIVDPQNGHLGFEIGYFPRDCVMLIDDKRLPNPLNTEPKPAPRNARRYMTTMFRNRRREPIFGLELTELFMRTGKRVPVIVERCCAAIEDQGIVTGIYRQCGIQSNIQRLRAKFDSGAEPDLHEFGQRDIYSVSSLLKQYFRQLPNPLFTYQAYPALIETFEKEESVEEKVESLRFLLEAMPEHLSRLCKSKSLTDMTSKNLAIVWSPNLFRPPPTLNGADAHLLSGLNVHTAICDFCIENSDSLFICDIDEEQSKCTSIENSFTTISKSATMSDMRSESDSRWPRFFRGKSVEGFWKFNRKQQTSTGELCGSPPSEVKWRSRSTRSHSTDATFQSSRADSFMQLMHTGMDQIREGMRIFRARARSMRPTSRPPPSPRTRRARFSNGGGANNVQRVNERERDIQIELPLATAESSITPEPRSTMDSNNIMTRTVSVNDSDDASFEENGLKEIRERKVMFKAATQEHVAPIHERSSPVEEWSSDSRESLHLEMSRYDNVSPSGTITRSQREPISNLSPAAQLLFFESSRASQLFSA.

The SH3 domain maps to P165–D244. The region spanning L281 to F463 is the Rho-GAP domain. Disordered stretches follow at residues S523–Q552 and R582–N609.

Functions as a GTPase-activating protein (GAP) for ced-10/RAC-1 and CDC42. The chain is GTPase-activating protein rrc-1 from Caenorhabditis briggsae.